Here is a 319-residue protein sequence, read N- to C-terminus: HTH-type transcriptional regulator YidZ (319 aa).

Residues 8 to 65 enclose the HTH lysR-type domain; sequence LDLNLLLCLQLLMQERSVTKAAKRMNVTPSAVSKSLAKLRAWFDDPLFVNSPLGLSPT. Residues 25-44 constitute a DNA-binding region (H-T-H motif); it reads VTKAAKRMNVTPSAVSKSLA.

Belongs to the LysR transcriptional regulatory family.

Involved in anaerobic NO protection. The polypeptide is HTH-type transcriptional regulator YidZ (Escherichia coli O157:H7 (strain EC4115 / EHEC)).